The primary structure comprises 452 residues: Bifunctional protein GlmU (452 aa).

The tract at residues 1–226 (MSLHIIILAA…LHEVEGVNNR (226 aa)) is pyrophosphorylase. UDP-N-acetyl-alpha-D-glucosamine-binding positions include 8–11 (LAAG), Lys-22, Gln-73, 78–79 (GT), 100–102 (YGD), Gly-136, Glu-151, Asn-166, and Asn-224. Asp-102 contacts Mg(2+). Asn-224 contributes to the Mg(2+) binding site. The tract at residues 227-247 (IQLAALERAYQQQVAEELMLA) is linker. The segment at 248–452 (GATLRDPARV…IDGWTRPVKK (205 aa)) is N-acetyltransferase. Residues Arg-330 and Lys-348 each contribute to the UDP-N-acetyl-alpha-D-glucosamine site. The active-site Proton acceptor is His-360. Residues Tyr-363 and Asn-374 each coordinate UDP-N-acetyl-alpha-D-glucosamine. Acetyl-CoA-binding positions include Ala-377, 383-384 (NY), Ser-402, Ala-420, and Arg-437.

This sequence in the N-terminal section; belongs to the N-acetylglucosamine-1-phosphate uridyltransferase family. The protein in the C-terminal section; belongs to the transferase hexapeptide repeat family. As to quaternary structure, homotrimer. Mg(2+) serves as cofactor.

The protein resides in the cytoplasm. It catalyses the reaction alpha-D-glucosamine 1-phosphate + acetyl-CoA = N-acetyl-alpha-D-glucosamine 1-phosphate + CoA + H(+). It carries out the reaction N-acetyl-alpha-D-glucosamine 1-phosphate + UTP + H(+) = UDP-N-acetyl-alpha-D-glucosamine + diphosphate. Its pathway is nucleotide-sugar biosynthesis; UDP-N-acetyl-alpha-D-glucosamine biosynthesis; N-acetyl-alpha-D-glucosamine 1-phosphate from alpha-D-glucosamine 6-phosphate (route II): step 2/2. It participates in nucleotide-sugar biosynthesis; UDP-N-acetyl-alpha-D-glucosamine biosynthesis; UDP-N-acetyl-alpha-D-glucosamine from N-acetyl-alpha-D-glucosamine 1-phosphate: step 1/1. It functions in the pathway bacterial outer membrane biogenesis; LPS lipid A biosynthesis. In terms of biological role, catalyzes the last two sequential reactions in the de novo biosynthetic pathway for UDP-N-acetylglucosamine (UDP-GlcNAc). The C-terminal domain catalyzes the transfer of acetyl group from acetyl coenzyme A to glucosamine-1-phosphate (GlcN-1-P) to produce N-acetylglucosamine-1-phosphate (GlcNAc-1-P), which is converted into UDP-GlcNAc by the transfer of uridine 5-monophosphate (from uridine 5-triphosphate), a reaction catalyzed by the N-terminal domain. This is Bifunctional protein GlmU from Hahella chejuensis (strain KCTC 2396).